A 337-amino-acid polypeptide reads, in one-letter code: 6-phosphogluconolactonase (337 aa).

This sequence belongs to the cycloisomerase 2 family.

It carries out the reaction 6-phospho-D-glucono-1,5-lactone + H2O = 6-phospho-D-gluconate + H(+). It functions in the pathway carbohydrate degradation; pentose phosphate pathway; D-ribulose 5-phosphate from D-glucose 6-phosphate (oxidative stage): step 2/3. Functionally, catalyzes the hydrolysis of 6-phosphogluconolactone to 6-phosphogluconate. In Blochmanniella pennsylvanica (strain BPEN), this protein is 6-phosphogluconolactonase.